The sequence spans 343 residues: Probable dual-specificity RNA methyltransferase RlmN (343 aa).

Glu90 serves as the catalytic Proton acceptor. The Radical SAM core domain maps to 96-325 (HEGYATACIS…AEIRYEKGAD (230 aa)). A disulfide bond links Cys103 and Cys330. Cys110, Cys114, and Cys117 together coordinate [4Fe-4S] cluster. S-adenosyl-L-methionine-binding positions include 157-158 (GE), Ser189, 212-214 (SLH), and Asn288. Cys330 serves as the catalytic S-methylcysteine intermediate.

This sequence belongs to the radical SAM superfamily. RlmN family. Requires [4Fe-4S] cluster as cofactor.

It localises to the cytoplasm. The enzyme catalyses adenosine(2503) in 23S rRNA + 2 reduced [2Fe-2S]-[ferredoxin] + 2 S-adenosyl-L-methionine = 2-methyladenosine(2503) in 23S rRNA + 5'-deoxyadenosine + L-methionine + 2 oxidized [2Fe-2S]-[ferredoxin] + S-adenosyl-L-homocysteine. It carries out the reaction adenosine(37) in tRNA + 2 reduced [2Fe-2S]-[ferredoxin] + 2 S-adenosyl-L-methionine = 2-methyladenosine(37) in tRNA + 5'-deoxyadenosine + L-methionine + 2 oxidized [2Fe-2S]-[ferredoxin] + S-adenosyl-L-homocysteine. Its function is as follows. Specifically methylates position 2 of adenine 2503 in 23S rRNA and position 2 of adenine 37 in tRNAs. The sequence is that of Probable dual-specificity RNA methyltransferase RlmN from Pseudothermotoga lettingae (strain ATCC BAA-301 / DSM 14385 / NBRC 107922 / TMO) (Thermotoga lettingae).